Reading from the N-terminus, the 166-residue chain is PTS system glucose-specific EIIA component (166 aa).

The 105-residue stretch at 34-138 folds into the PTS EIIA type-1 domain; it reads DPVFAQKMMG…SIISPIIITN (105 aa). The Zn(2+) site is built by H71 and H86. The Tele-phosphohistidine intermediate; for EIIA activity role is filled by H86. H86 carries the phosphohistidine; by HPr modification.

In terms of assembly, heterodimer with glycerol kinase (glpk). Zn(2+) serves as cofactor.

The protein resides in the cytoplasm. The phosphoenolpyruvate-dependent sugar phosphotransferase system (sugar PTS), a major carbohydrate active transport system, catalyzes the phosphorylation of incoming sugar substrates concomitantly with their translocation across the cell membrane. The enzyme II complex composed of PtsG and Crr is involved in glucose transport. This chain is PTS system glucose-specific EIIA component (crr), found in Staphylococcus epidermidis (strain ATCC 35984 / DSM 28319 / BCRC 17069 / CCUG 31568 / BM 3577 / RP62A).